Consider the following 428-residue polypeptide: Glycine reductase complex component B subunits alpha and beta (428 aa).

C242 (schiff-base intermediate with substrate; via pyruvic acid) is an active-site residue. Position 242 is a pyruvic acid (Cys) (C242).

Heterohexamer of two alpha, two beta and two gamma subunits. Component of the glycine reductase complex, together with components A and C. PB is substrate specific. In terms of processing, the peptide chain is cleaved into beta and alpha chains, and the alpha chain N-terminal cysteine is deaminated and oxidized to form a reactive pyruvoyl group.

It carries out the reaction acetyl phosphate + [thioredoxin]-disulfide + NH4(+) + H2O = [thioredoxin]-dithiol + glycine + phosphate + H(+). Its function is as follows. In the first step of glycine reductase, the substrate is bound to component PB via a Schiff base intermediate. Then the PB-activated substrate is nucleophilically attacked by the selenol anion of component PA to transform it to a carboxymethylated selenoether and the respective amine. By action of component PC, acetyl phosphate is formed, leaving component PA in its oxidized state. Finally component PA becomes reduced by the thioredoxin system to start a new catalytic cycle of reductive deamination. This is Glycine reductase complex component B subunits alpha and beta (grdE) from Peptoclostridium acidaminophilum (Eubacterium acidaminophilum).